The sequence spans 255 residues: uncharacterized protein (255 aa).

Residues 4 to 59 (RNERLNLIRKRVDQYGQVAVKDLAIFLQVTPETVRKDLETLENDKLITRTHGGAIQ) enclose the HTH deoR-type domain. Residues 21-40 (VAVKDLAIFLQVTPETVRKD) constitute a DNA-binding region (H-T-H motif).

This is an uncharacterized protein from Staphylococcus epidermidis (strain ATCC 12228 / FDA PCI 1200).